The following is a 308-amino-acid chain: UDP-N-acetylenolpyruvoylglucosamine reductase (308 aa).

One can recognise an FAD-binding PCMH-type domain in the interval 32–196 (VGGPAARLYK…ISAKLQLSPG (165 aa)). Arg176 is an active-site residue. Ser225 serves as the catalytic Proton donor. Residue Glu296 is part of the active site.

Belongs to the MurB family. The cofactor is FAD.

It localises to the cytoplasm. It carries out the reaction UDP-N-acetyl-alpha-D-muramate + NADP(+) = UDP-N-acetyl-3-O-(1-carboxyvinyl)-alpha-D-glucosamine + NADPH + H(+). Its pathway is cell wall biogenesis; peptidoglycan biosynthesis. Functionally, cell wall formation. This chain is UDP-N-acetylenolpyruvoylglucosamine reductase, found in Legionella pneumophila subsp. pneumophila (strain Philadelphia 1 / ATCC 33152 / DSM 7513).